Reading from the N-terminus, the 232-residue chain is Large ribosomal subunit protein uL1 (232 aa).

This sequence belongs to the universal ribosomal protein uL1 family. Part of the 50S ribosomal subunit.

In terms of biological role, binds directly to 23S rRNA. The L1 stalk is quite mobile in the ribosome, and is involved in E site tRNA release. Protein L1 is also a translational repressor protein, it controls the translation of the L11 operon by binding to its mRNA. The chain is Large ribosomal subunit protein uL1 from Sinorhizobium fredii (strain NBRC 101917 / NGR234).